The chain runs to 144 residues: MAKTAQFYILTENCTLTVEEIACNLAASIWRSGKKVLISCESEAQALEIDERLWQRDPNEFVPHNLSGEATQYPTPIEISWLGKRNLQRRDLLINLQQEIPDFSHSFTQIIDFVPKDDALKTQARERYKQLRLQGWNLSTENVG.

The protein belongs to the DNA polymerase III chi/HolC chain family. As to quaternary structure, DNA polymerase III contains a core (composed of alpha, epsilon and theta chains) that associates with a tau subunit. This core dimerizes to form the POLIII' complex. PolIII' associates with the gamma complex (composed of gamma, delta, delta', psi and chi chains) and with the beta chain to form the complete DNA polymerase III complex. Interacts directly with the psi subunit (holD). The only subunit of the DNA polymerase III holoenzyme known to interact with single-stranded DNA binding protein (SSB), interacts directly with DNA helicase YoaA.

It catalyses the reaction DNA(n) + a 2'-deoxyribonucleoside 5'-triphosphate = DNA(n+1) + diphosphate. In terms of biological role, part of the beta sliding clamp loading complex, which hydrolyzes ATP to load the beta clamp onto primed DNA to form the DNA replication pre-initiation complex. DNA polymerase III is a complex, multichain enzyme responsible for most of the replicative synthesis in bacteria. This DNA polymerase also exhibits 3' to 5' exonuclease activity. This subunit may stabilize YoaA and/or stimulate the helicase activity of YoaA. The polypeptide is DNA polymerase III subunit chi (holC) (Haemophilus influenzae (strain ATCC 51907 / DSM 11121 / KW20 / Rd)).